The primary structure comprises 860 residues: Alanine--tRNA ligase (860 aa).

4 residues coordinate Zn(2+): H563, H567, C665, and H669.

The protein belongs to the class-II aminoacyl-tRNA synthetase family. The cofactor is Zn(2+).

The protein localises to the cytoplasm. The catalysed reaction is tRNA(Ala) + L-alanine + ATP = L-alanyl-tRNA(Ala) + AMP + diphosphate. Its function is as follows. Catalyzes the attachment of alanine to tRNA(Ala) in a two-step reaction: alanine is first activated by ATP to form Ala-AMP and then transferred to the acceptor end of tRNA(Ala). Also edits incorrectly charged Ser-tRNA(Ala) and Gly-tRNA(Ala) via its editing domain. This Vibrio cholerae serotype O1 (strain ATCC 39541 / Classical Ogawa 395 / O395) protein is Alanine--tRNA ligase.